The chain runs to 576 residues: Vacuolar protein sorting-associated protein vps5 (576 aa).

2 disordered regions span residues methionine 1 to arginine 60 and aspartate 156 to serine 198. Residue threonine 55 is modified to Phosphothreonine. The span at aspartate 156 to valine 169 shows a compositional bias: polar residues. Residues serine 170–serine 181 show a composition bias toward low complexity. The 118-residue stretch at threonine 200–aspartate 317 folds into the PX domain. 3 residues coordinate a 1,2-diacyl-sn-glycero-3-phospho-(1D-myo-inositol-3-phosphate): arginine 244, lysine 270, and arginine 284. Phosphoserine is present on serine 332.

It belongs to the sorting nexin family. Component of the retromer complex which consists of vps29, vps26, vps35, vps5 and vps17.

The protein localises to the cytoplasm. It is found in the golgi apparatus. Its subcellular location is the membrane. In terms of biological role, required for efficient sporulation target of PtdIns(3)P in vesicle transport required for onset of the forespore membrane formation. Its function is as follows. Plays a role in vesicular protein sorting. Required for the endosome-to-Golgi retrieval of the vacuolar protein sorting receptor pep1/vps10. Component of the membrane-associated retromer complex which is essential in endosome-to-Golgi retrograde transport. The vps29-vps26-vps35 subcomplex may be involved in cargo selection. This Schizosaccharomyces pombe (strain 972 / ATCC 24843) (Fission yeast) protein is Vacuolar protein sorting-associated protein vps5 (vps5).